The following is a 496-amino-acid chain: Probable malate:quinone oxidoreductase (496 aa).

This sequence belongs to the MQO family. The cofactor is FAD.

The catalysed reaction is (S)-malate + a quinone = a quinol + oxaloacetate. It functions in the pathway carbohydrate metabolism; tricarboxylic acid cycle; oxaloacetate from (S)-malate (quinone route): step 1/1. The sequence is that of Probable malate:quinone oxidoreductase from Prochlorococcus marinus (strain NATL2A).